The chain runs to 191 residues: UPF0312 protein PA0423 (191 aa).

Residues M1–A23 form the signal peptide.

The protein belongs to the UPF0312 family. Type 1 subfamily.

The protein localises to the periplasm. The chain is UPF0312 protein PA0423 from Pseudomonas aeruginosa (strain ATCC 15692 / DSM 22644 / CIP 104116 / JCM 14847 / LMG 12228 / 1C / PRS 101 / PAO1).